Here is a 792-residue protein sequence, read N- to C-terminus: Endonuclease MutS2 (792 aa).

334–341 (GPNTGGKT) is an ATP binding site. Residues 717 to 792 (INLIGKTTDE…DAGVTIATFK (76 aa)) form the Smr domain.

It belongs to the DNA mismatch repair MutS family. MutS2 subfamily. Homodimer. Binds to stalled ribosomes, contacting rRNA.

In terms of biological role, endonuclease that is involved in the suppression of homologous recombination and thus may have a key role in the control of bacterial genetic diversity. Its function is as follows. Acts as a ribosome collision sensor, splitting the ribosome into its 2 subunits. Detects stalled/collided 70S ribosomes which it binds and splits by an ATP-hydrolysis driven conformational change. Acts upstream of the ribosome quality control system (RQC), a ribosome-associated complex that mediates the extraction of incompletely synthesized nascent chains from stalled ribosomes and their subsequent degradation. Probably generates substrates for RQC. The chain is Endonuclease MutS2 from Agathobacter rectalis (strain ATCC 33656 / DSM 3377 / JCM 17463 / KCTC 5835 / VPI 0990) (Eubacterium rectale).